The sequence spans 426 residues: Proline--tRNA ligase (426 aa).

It belongs to the class-II aminoacyl-tRNA synthetase family. ProS type 2 subfamily. As to quaternary structure, homodimer.

The protein resides in the cytoplasm. The enzyme catalyses tRNA(Pro) + L-proline + ATP = L-prolyl-tRNA(Pro) + AMP + diphosphate. Functionally, catalyzes the attachment of proline to tRNA(Pro) in a two-step reaction: proline is first activated by ATP to form Pro-AMP and then transferred to the acceptor end of tRNA(Pro). This is Proline--tRNA ligase from Rickettsia peacockii (strain Rustic).